The primary structure comprises 307 residues: Voltage-dependent anion channel-forming protein sll1024 (307 aa).

4 helical membrane-spanning segments follow: residues 26-46 (VIPAIASRVLVCMAFSLGVTL), 54-74 (FSIPIQESIVPSIVLGLLLVF), 226-246 (LIFLYCFITPFQIVNTLHWAT), and 247-267 (AFVVGIIAFTVFGIEEIGVEI).

It belongs to the anion channel-forming bestrophin (TC 1.A.46) family.

The protein resides in the cell membrane. This chain is Voltage-dependent anion channel-forming protein sll1024, found in Synechocystis sp. (strain ATCC 27184 / PCC 6803 / Kazusa).